Consider the following 181-residue polypeptide: Adenine phosphoribosyltransferase (181 aa).

It belongs to the purine/pyrimidine phosphoribosyltransferase family. As to quaternary structure, homodimer.

It is found in the cytoplasm. The catalysed reaction is AMP + diphosphate = 5-phospho-alpha-D-ribose 1-diphosphate + adenine. Its pathway is purine metabolism; AMP biosynthesis via salvage pathway; AMP from adenine: step 1/1. Catalyzes a salvage reaction resulting in the formation of AMP, that is energically less costly than de novo synthesis. The sequence is that of Adenine phosphoribosyltransferase from Rhodopseudomonas palustris (strain HaA2).